A 670-amino-acid chain; its full sequence is tRNA 5-methylaminomethyl-2-thiouridine biosynthesis bifunctional protein MnmC (670 aa).

Positions 1 to 242 (MTFSVQHAEI…KRECLSGLKI (242 aa)) are tRNA (mnm(5)s(2)U34)-methyltransferase. Residues 269–670 (IGGGIASLCA…KKWLKGSKVE (402 aa)) form an FAD-dependent cmnm(5)s(2)U34 oxidoreductase region.

The protein in the N-terminal section; belongs to the methyltransferase superfamily. tRNA (mnm(5)s(2)U34)-methyltransferase family. It in the C-terminal section; belongs to the DAO family. FAD is required as a cofactor.

The protein localises to the cytoplasm. It catalyses the reaction 5-aminomethyl-2-thiouridine(34) in tRNA + S-adenosyl-L-methionine = 5-methylaminomethyl-2-thiouridine(34) in tRNA + S-adenosyl-L-homocysteine + H(+). Functionally, catalyzes the last two steps in the biosynthesis of 5-methylaminomethyl-2-thiouridine (mnm(5)s(2)U) at the wobble position (U34) in tRNA. Catalyzes the FAD-dependent demodification of cmnm(5)s(2)U34 to nm(5)s(2)U34, followed by the transfer of a methyl group from S-adenosyl-L-methionine to nm(5)s(2)U34, to form mnm(5)s(2)U34. This chain is tRNA 5-methylaminomethyl-2-thiouridine biosynthesis bifunctional protein MnmC, found in Haemophilus influenzae (strain PittEE).